The primary structure comprises 529 residues: Ribonuclease Y (529 aa).

The chain crosses the membrane as a helical span at residues 4–24 (GLIYISLEVLVACLITALVMY). The 82-residue stretch at 216 to 297 (LTTRIALPCS…NRIEEVYHRV (82 aa)) folds into the KH domain. In terms of domain architecture, HD spans 342–435 (ALQHSKEVAL…VCAADALSAG (94 aa)).

The protein belongs to the RNase Y family.

It is found in the cell membrane. In terms of biological role, endoribonuclease that initiates mRNA decay. The polypeptide is Ribonuclease Y (Helicobacter pylori (strain ATCC 700392 / 26695) (Campylobacter pylori)).